The following is a 401-amino-acid chain: Serine--glyoxylate aminotransferase (401 aa).

Methionine 1 carries the post-translational modification N-acetylmethionine. Pyridoxal 5'-phosphate is bound by residues 68-70 (TGT), threonine 148, and 200-201 (QK). Lysine 201 lines the 3-hydroxypyruvate pocket. Position 201 is an N6-(pyridoxal phosphate)lysine (lysine 201). Serine 204 carries the phosphoserine modification. Arginine 347 provides a ligand contact to 3-hydroxypyruvate. A Microbody targeting signal motif is present at residues 399-401 (SRI).

This sequence belongs to the class-V pyridoxal-phosphate-dependent aminotransferase family. Forms homodimers. Interacts with RABGAP22. The cofactor is pyridoxal 5'-phosphate. As to expression, widely expressed. Preferentially expressed in green, leafy tissues, root cortex and epidermis, developing siliques and dry seeds.

It is found in the peroxisome. It catalyses the reaction glyoxylate + L-serine = 3-hydroxypyruvate + glycine. It carries out the reaction glyoxylate + L-alanine = glycine + pyruvate. The enzyme catalyses L-serine + pyruvate = 3-hydroxypyruvate + L-alanine. The catalysed reaction is 3-hydroxypyruvate + L-asparagine = 2-oxosuccinamate + L-serine. It catalyses the reaction L-asparagine + glyoxylate = 2-oxosuccinamate + glycine. It carries out the reaction L-asparagine + pyruvate = 2-oxosuccinamate + L-alanine. Inhibited by aminooxyacetate and beta-chloro-L-alanine, but not by p-hydroxymercuribenzoate. Functionally, photorespiratory enzyme that catalyzes transamination reactions with multiple substrates, including asparagine. Functions exclusively as a catabolic enzyme in Asn metabolism. Involved in root development during seedling establishment after seed germination by regulating serine homeostasis and acetate conversion. The protein is Serine--glyoxylate aminotransferase of Arabidopsis thaliana (Mouse-ear cress).